Consider the following 364-residue polypeptide: Carbamoyl phosphate synthase pyrimidine-specific small chain (364 aa).

The segment at 1-171 (MKRRLVLENG…AYPSPGRGKR (171 aa)) is CPSase. The L-glutamine site is built by Ser45, Gly219, and Gly221. Residues 171–356 (RIVLVDFGMK…IEMIETTEKE (186 aa)) form the Glutamine amidotransferase type-1 domain. Cys246 (nucleophile) is an active-site residue. L-glutamine-binding residues include Leu247, Gln250, Asn288, Gly290, and Tyr291. Catalysis depends on residues His329 and Glu331.

Belongs to the CarA family. In terms of assembly, composed of two chains; the small (or glutamine) chain promotes the hydrolysis of glutamine to ammonia, which is used by the large (or ammonia) chain to synthesize carbamoyl phosphate. Tetramer of heterodimers (alpha,beta)4. Interacts with BrxC.

The enzyme catalyses hydrogencarbonate + L-glutamine + 2 ATP + H2O = carbamoyl phosphate + L-glutamate + 2 ADP + phosphate + 2 H(+). It catalyses the reaction L-glutamine + H2O = L-glutamate + NH4(+). Its pathway is pyrimidine metabolism; UMP biosynthesis via de novo pathway; (S)-dihydroorotate from bicarbonate: step 1/3. Functionally, small subunit of the glutamine-dependent carbamoyl phosphate synthetase (CPSase). CPSase catalyzes the formation of carbamoyl phosphate from the ammonia moiety of glutamine, carbonate, and phosphate donated by ATP, constituting the first step of the biosynthetic pathway leading to arginine and/or urea. The small subunit (glutamine amidotransferase) binds and cleaves glutamine to supply the large subunit with the substrate ammonia. In Bacillus subtilis (strain 168), this protein is Carbamoyl phosphate synthase pyrimidine-specific small chain.